The chain runs to 487 residues: Aspartyl/glutamyl-tRNA(Asn/Gln) amidotransferase subunit B (487 aa).

This sequence belongs to the GatB/GatE family. GatB subfamily. As to quaternary structure, heterotrimer of A, B and C subunits.

The catalysed reaction is L-glutamyl-tRNA(Gln) + L-glutamine + ATP + H2O = L-glutaminyl-tRNA(Gln) + L-glutamate + ADP + phosphate + H(+). It carries out the reaction L-aspartyl-tRNA(Asn) + L-glutamine + ATP + H2O = L-asparaginyl-tRNA(Asn) + L-glutamate + ADP + phosphate + 2 H(+). Allows the formation of correctly charged Asn-tRNA(Asn) or Gln-tRNA(Gln) through the transamidation of misacylated Asp-tRNA(Asn) or Glu-tRNA(Gln) in organisms which lack either or both of asparaginyl-tRNA or glutaminyl-tRNA synthetases. The reaction takes place in the presence of glutamine and ATP through an activated phospho-Asp-tRNA(Asn) or phospho-Glu-tRNA(Gln). This is Aspartyl/glutamyl-tRNA(Asn/Gln) amidotransferase subunit B from Acidiphilium cryptum (strain JF-5).